Reading from the N-terminus, the 449-residue chain is Streptomycin-6-phosphate phosphatase (449 aa).

An N-terminal signal peptide occupies residues 1–32 (MRFAYGRLPWRRGAVLGSALLVLVTAPAASTA). Position 50 (Asp-50) interacts with Mg(2+). Asp-50 provides a ligand contact to Zn(2+). Ser-99 serves as the catalytic Phosphoserine intermediate. Mg(2+) contacts are provided by Asp-151 and Thr-153. Residues 268-290 (APGGTAPQRCATRNPGRPAGTPD) form a disordered region. Glu-321 contributes to the Mg(2+) binding site. Positions 326, 330, 368, 369, and 412 each coordinate Zn(2+).

Belongs to the alkaline phosphatase family. Mg(2+) is required as a cofactor. Zn(2+) serves as cofactor.

The protein localises to the secreted. It carries out the reaction streptomycin 6-phosphate + H2O = streptomycin + phosphate. It participates in antibiotic biosynthesis; streptomycin biosynthesis. In terms of biological role, specifically cleaves both streptomycin-6-phosphate and, more slowly, streptomycin-3''-phosphate during the biosynthesis of streptomycin. The polypeptide is Streptomycin-6-phosphate phosphatase (strK) (Streptomyces griseus).